Reading from the N-terminus, the 125-residue chain is Large ribosomal subunit protein bL12 (125 aa).

Belongs to the bacterial ribosomal protein bL12 family. As to quaternary structure, homodimer. Part of the ribosomal stalk of the 50S ribosomal subunit. Forms a multimeric L10(L12)X complex, where L10 forms an elongated spine to which 2 to 4 L12 dimers bind in a sequential fashion. Binds GTP-bound translation factors.

In terms of biological role, forms part of the ribosomal stalk which helps the ribosome interact with GTP-bound translation factors. Is thus essential for accurate translation. In Polaromonas naphthalenivorans (strain CJ2), this protein is Large ribosomal subunit protein bL12.